The chain runs to 66 residues: Alpha-conotoxin GID (66 aa).

A signal peptide spans 1–21 (MGMRMMFTVFLLVVLAATIVS). Residues 22–44 (FTSDRASDGRNVAAKAFHRIGRT) constitute a propeptide that is removed on maturation. Positions 45–48 (IRDE) are N-terminal tail important for activity on alpha-3-beta-2/CHRNA3-CHRNB2 and alpha-4-beta-2/CHRNA4-CHRNB2 nAChR. Glutamate 48 is modified (4-carboxyglutamate). 2 disulfide bridges follow: cysteine 49–cysteine 55 and cysteine 50–cysteine 63. The segment at 51 to 53 (SNP) is ser-Xaa-Pro motif, crucial for potent interaction with nAChR. Proline 60 is subject to 4-hydroxyproline.

The protein belongs to the conotoxin A superfamily. In terms of processing, gamma-carboxyglutamation of Glu-48 seems to be not important for nAChR inhibition, since synthetic peptides without this modification do not show change in inhibition of alpha-7/CHRNA7 and alpha-3-beta-2/CHRNA3-CHRNB2 nAChR and show a 2.3-fold increase in inhibition of alpha-4-beta-2/CHRNA4-CHRNB2 nAChR. Post-translationally, hydroxylation of Pro-60 seems to be important for nAChR inhibition, since synthetic peptides without this modification show a small decrease in inhibition of alpha-7/CHRNA7 and alpha-3-beta-2/CHRNA3-CHRNB2 nAChR and a very important decrease in inhibition of alpha-4-beta-2/CHRNA4-CHRNB2 nAChR. An amidation of Cys-63 increases potency against alpha-7/CHRNA7 (2.6-fold) and alpha-3-beta-2/CHRNA3-CHRNB2 (2-fold) nAChR. On the other hand, the peptide has no more activity on alpha-4-beta-2/CHRNA4-CHRNB2 nAChR with an amidated Cys-63. As to expression, expressed by the venom duct.

The protein resides in the secreted. Alpha-conotoxins act on postsynaptic membranes, they bind to the nicotinic acetylcholine receptors (nAChR) and thus inhibit them. This toxin reversibly blocks alpha-3-beta-2/CHRNA3-CHRNB2 (IC(50)=3.1-5.1 nM), alpha-7/CHRNA7 (IC(50)=4.5-5.1 nM), and alpha-4-beta-2/CHRNA4-CHRNB2 (IC(50)=128.6-390 nM) nAChRs. This chain is Alpha-conotoxin GID, found in Conus geographus (Geography cone).